A 121-amino-acid polypeptide reads, in one-letter code: MGNLIKELQDEQCRTDLVDFCVGDTIRVATNISEGGKERVQVFQGTVMARKGGGAGETVSLHRVAYGEGMEKSFLLNSPKVVSIEVVKRGKVSRARLFYLRGKTGKAAKVKELIGPRAAKK.

This sequence belongs to the bacterial ribosomal protein bL19 family.

In terms of biological role, this protein is located at the 30S-50S ribosomal subunit interface and may play a role in the structure and function of the aminoacyl-tRNA binding site. The polypeptide is Large ribosomal subunit protein bL19 (rplS) (Chlamydia muridarum (strain MoPn / Nigg)).